The chain runs to 356 residues: UDP-3-O-acylglucosamine N-acyltransferase (356 aa).

His242 functions as the Proton acceptor in the catalytic mechanism.

This sequence belongs to the transferase hexapeptide repeat family. LpxD subfamily. As to quaternary structure, homotrimer.

The enzyme catalyses a UDP-3-O-[(3R)-3-hydroxyacyl]-alpha-D-glucosamine + a (3R)-hydroxyacyl-[ACP] = a UDP-2-N,3-O-bis[(3R)-3-hydroxyacyl]-alpha-D-glucosamine + holo-[ACP] + H(+). The protein operates within bacterial outer membrane biogenesis; LPS lipid A biosynthesis. Catalyzes the N-acylation of UDP-3-O-acylglucosamine using 3-hydroxyacyl-ACP as the acyl donor. Is involved in the biosynthesis of lipid A, a phosphorylated glycolipid that anchors the lipopolysaccharide to the outer membrane of the cell. The protein is UDP-3-O-acylglucosamine N-acyltransferase of Acinetobacter baumannii (strain ACICU).